The primary structure comprises 134 residues: Large ribosomal subunit protein bL17 (134 aa).

It belongs to the bacterial ribosomal protein bL17 family. As to quaternary structure, part of the 50S ribosomal subunit. Contacts protein L32.

In Thioalkalivibrio sulfidiphilus (strain HL-EbGR7), this protein is Large ribosomal subunit protein bL17.